We begin with the raw amino-acid sequence, 425 residues long: Protein upregulated in glial subsets pugs-5 (425 aa).

Positions 355–373 (NNNDVEKSTQIEKKPEKQG) are enriched in basic and acidic residues. The tract at residues 355 to 407 (NNNDVEKSTQIEKKPEKQGPEIQEEVVEMETVKDEQPPKTSAVRFKENSPRLM) is disordered.

The polypeptide is Protein upregulated in glial subsets pugs-5 (Caenorhabditis elegans).